The chain runs to 1673 residues: Glutamine and serine-rich protein 1 (1673 aa).

Disordered regions lie at residues 265–322 (VIPS…SSQA), 411–543 (DQTR…KSYV), 872–892 (RHMSPNFTPPKPQNMNNLSIN), 923–961 (QDLPSGMVSPVPGANQDDHEKNSENIKNPPNVNQEPKEG), 1050–1081 (DENANLKQIKRNMPLKRSVSKGPDVPGAQYSS), 1149–1182 (VIRPPCPGPLSPQSVAGAPVSDSGSASPPKKAEE), 1216–1272 (LSAL…EQLA), and 1390–1476 (KSKV…PPPI). Residues 289-309 (SSKTPKSQSVVSPELTQSYTK) are compositionally biased toward polar residues. Low complexity-rich tracts occupy residues 310–322 (SSQNQSSVNSSQA) and 411–458 (DQTR…PSDS). The segment covering 459 to 539 (YTSGQNQTLA…MQNSRTTADS (81 aa)) has biased composition (polar residues). Residues 947–956 (NIKNPPNVNQ) show a composition bias toward polar residues. Positions 1222-1233 (NSEKRLKTEGDK) are enriched in basic and acidic residues. Polar residues-rich tracts occupy residues 1259 to 1272 (KPSQPEATQPEQLA) and 1397 to 1411 (ARTTHTKASGGSKVS). A compositionally biased stretch (basic and acidic residues) spans 1435–1451 (TKAEPPPKKRKQWKEEF). Residues 1452–1462 (SSSQSDSSPDM) are compositionally biased toward low complexity.

It is found in the chromosome. In terms of biological role, plays an essential role in the protection and maintenance of transcriptional and developmental programs. Protects many bivalent promoters and poised enhancers from hypermethylation, showing a marked preference for these regulatory elements over other types of promoters or enhancers. Mechanistically, cooperates with tet1 and binds to DNA in a common complex to inhibit the binding of dnmt3a/3b and therefore de novo methylation. This is Glutamine and serine-rich protein 1 (qser1) from Xenopus laevis (African clawed frog).